The chain runs to 296 residues: Hca operon transcriptional activator HcaR (296 aa).

The region spanning 1-58 (MELRHLRYFVAVAQALNFTRAAEKLHTSQPSLSSQIRDLENCVGVPLLVRDKRKVALT) is the HTH lysR-type domain. The H-T-H motif DNA-binding region spans 18–38 (FTRAAEKLHTSQPSLSSQIRD).

Belongs to the LysR transcriptional regulatory family.

Its function is as follows. Transcriptional activator of the hca operon for 3-phenylpropionic acid catabolism. This chain is Hca operon transcriptional activator HcaR (hcaR), found in Escherichia coli (strain K12).